Consider the following 457-residue polypeptide: Putative methyltransferase MT1451 (457 aa).

S-adenosyl-L-methionine is bound by residues 276 to 282 (CAGPGGK), Glu-301, Asp-325, and Asp-341. The active-site Nucleophile is Cys-394.

This sequence belongs to the class I-like SAM-binding methyltransferase superfamily. RsmB/NOP family.

In terms of biological role, may act as RNA methyltransferase. This is Putative methyltransferase MT1451 from Mycobacterium tuberculosis (strain CDC 1551 / Oshkosh).